The primary structure comprises 254 residues: MTTEHSQSKKTIDFGFSEVPLEEKVKKVKGVFDSVAGNYDIMNDVMSFGIHRLWKRHAIELSGIRPGNVVLDLAGGTGDLTKAFAKRVGKTGRVVLADINESMVRVGRDRLTNEGIIGNVDYTITNAEALTYPDNTFDLVTISFGLRNVTNKDKALEEIYRVLKPGGQLMVLEFSKVTQPLLAKAYDFYSFNILPKMGKLIADDEASYQYLAESIRMHPDQETLKKMMLEAGFDKAEYLNMSEGIVALHRGWKY.

S-adenosyl-L-methionine-binding positions include T77, D98, 126–127 (NA), and S143.

It belongs to the class I-like SAM-binding methyltransferase superfamily. MenG/UbiE family.

It carries out the reaction a 2-demethylmenaquinol + S-adenosyl-L-methionine = a menaquinol + S-adenosyl-L-homocysteine + H(+). The enzyme catalyses a 2-methoxy-6-(all-trans-polyprenyl)benzene-1,4-diol + S-adenosyl-L-methionine = a 5-methoxy-2-methyl-3-(all-trans-polyprenyl)benzene-1,4-diol + S-adenosyl-L-homocysteine + H(+). It functions in the pathway quinol/quinone metabolism; menaquinone biosynthesis; menaquinol from 1,4-dihydroxy-2-naphthoate: step 2/2. It participates in cofactor biosynthesis; ubiquinone biosynthesis. Methyltransferase required for the conversion of demethylmenaquinol (DMKH2) to menaquinol (MKH2) and the conversion of 2-polyprenyl-6-methoxy-1,4-benzoquinol (DDMQH2) to 2-polyprenyl-3-methyl-6-methoxy-1,4-benzoquinol (DMQH2). The polypeptide is Ubiquinone/menaquinone biosynthesis C-methyltransferase UbiE (Hydrogenovibrio crunogenus (strain DSM 25203 / XCL-2) (Thiomicrospira crunogena)).